A 297-amino-acid chain; its full sequence is 2-phospho-L-lactate transferase (297 aa).

Residue Asp-49 coordinates 7,8-didemethyl-8-hydroxy-5-deazariboflavin.

Belongs to the CofD family. In terms of assembly, homodimer. Requires Mg(2+) as cofactor.

The enzyme catalyses (2S)-lactyl-2-diphospho-5'-guanosine + 7,8-didemethyl-8-hydroxy-5-deazariboflavin = oxidized coenzyme F420-0 + GMP + H(+). The protein operates within cofactor biosynthesis; coenzyme F420 biosynthesis. Its function is as follows. Catalyzes the transfer of the 2-phospholactate moiety from (2S)-lactyl-2-diphospho-5'-guanosine to 7,8-didemethyl-8-hydroxy-5-deazariboflavin (FO) with the formation of oxidized coenzyme F420-0 and GMP. In Methanospirillum hungatei JF-1 (strain ATCC 27890 / DSM 864 / NBRC 100397 / JF-1), this protein is 2-phospho-L-lactate transferase.